Reading from the N-terminus, the 432-residue chain is Transcriptional adapter 3 (432 aa).

A Glycyl lysine isopeptide (Lys-Gly) (interchain with G-Cter in SUMO2) cross-link involves residue Lys21. Positions 40-69 (IEELDTLQLELETLLSSASRRLRVLEAETQ) form a coiled coil. The tract at residues 87-127 (GRDHELGAPPKHGKPKKQKLEGKTGHGPGPGPGRPKSKNVQ) is disordered. A Glycyl lysine isopeptide (Lys-Gly) (interchain with G-Cter in SUMO2) cross-link involves residue Lys129. A disordered region spans residues 272–319 (NIISPMEDSPIPDMSGKESGADGASTSPRNQNKPFSVPHTKSLESRIK). A phosphoserine mark is found at Ser280 and Ser298. Positions 295–305 (ASTSPRNQNKP) are enriched in polar residues. Residues 367–407 (LLRLAKEEVSRQELRQRVRMADNEVMDAFRKIMAARQKKRT) are a coiled coil. Lys418 bears the N6-acetyllysine mark.

Belongs to the NGG1 family. As to quaternary structure, the PCAF complex is composed of a number of TBP-associated factors (TAFS), such as TAF5, TAF5L, TAF6, TAF6L, TAF9, TAF10 and TAF12, PCAF, and also PCAF-associated factors (PAFs), such as TADA2L/ADA2, TADA3L/ADA3 and SPT3. Interacts directly with TADA2L and PCAF and also with the high-risk HPV oncoprotein E6. Component of the STAGA transcription coactivator-HAT complex, at least composed of SUPT3H, GCN5L2, TAF5L, TAF6L, SUPT7L, TADA3L, TAD1L, TAF10, TAF12, TRRAP and TAF9. Component of the TFTC-HAT complex. Component of the ADA2A-containing complex (ATAC), composed of KAT14, KAT2A, TADA2L, TADA3L, ZZ3, MBIP, WDR5, YEATS2, CCDC101 and DR1.

The protein localises to the nucleus. Its function is as follows. Functions as a component of the PCAF complex. The PCAF complex is capable of efficiently acetylating histones in a nucleosomal context. The PCAF complex could be considered as the human version of the yeast SAGA complex. Also known as a coactivator for p53/TP53-dependent transcriptional activation. Component of the ATAC complex, a complex with histone acetyltransferase activity on histones H3 and H4. The chain is Transcriptional adapter 3 (Tada3) from Mus musculus (Mouse).